The sequence spans 1372 residues: DNA-directed RNA polymerase subunit beta' (1372 aa).

Residues Cys-69, Cys-71, Cys-84, and Cys-87 each coordinate Zn(2+). Residues Asp-460, Asp-462, and Asp-464 each contribute to the Mg(2+) site. Zn(2+) contacts are provided by Cys-808, Cys-882, Cys-889, and Cys-892.

Belongs to the RNA polymerase beta' chain family. The RNAP catalytic core consists of 2 alpha, 1 beta, 1 beta' and 1 omega subunit. When a sigma factor is associated with the core the holoenzyme is formed, which can initiate transcription. It depends on Mg(2+) as a cofactor. Zn(2+) serves as cofactor.

It carries out the reaction RNA(n) + a ribonucleoside 5'-triphosphate = RNA(n+1) + diphosphate. Its function is as follows. DNA-dependent RNA polymerase catalyzes the transcription of DNA into RNA using the four ribonucleoside triphosphates as substrates. This Rickettsia typhi (strain ATCC VR-144 / Wilmington) protein is DNA-directed RNA polymerase subunit beta'.